A 292-amino-acid polypeptide reads, in one-letter code: MASLKDLRNRIASVKATQKITKAMQMVAAAKLRRAQNAAENARPYAERMAAVLGNLATNLTPGAETPRLLAGTGADRVHLLVVCTAERGLCGAFNSSIARLARDHARRLVAEGKTVKIICVGKKGYDILRREFRDQIVELIELRGVRQLGFENAEAVTENLLNRFEAGEFDIATLFYSRFRSVIAQVPTAQQIIPAEISPASESAQTDAAYEYEPEEGEILAALLPKNLTVQILRALLENAASEQGARMSAMDSATRNAGEMIKKQTLVYNRTRQAMITKELIEIISGAEAL.

Belongs to the ATPase gamma chain family. As to quaternary structure, F-type ATPases have 2 components, CF(1) - the catalytic core - and CF(0) - the membrane proton channel. CF(1) has five subunits: alpha(3), beta(3), gamma(1), delta(1), epsilon(1). CF(0) has three main subunits: a, b and c.

The protein localises to the cell inner membrane. Produces ATP from ADP in the presence of a proton gradient across the membrane. The gamma chain is believed to be important in regulating ATPase activity and the flow of protons through the CF(0) complex. The protein is ATP synthase gamma chain of Methylobacterium nodulans (strain LMG 21967 / CNCM I-2342 / ORS 2060).